Reading from the N-terminus, the 140-residue chain is Nucleoside diphosphate kinase (140 aa).

Residues lysine 11, phenylalanine 59, arginine 87, threonine 93, arginine 104, and asparagine 114 each coordinate ATP. The active-site Pros-phosphohistidine intermediate is histidine 117.

This sequence belongs to the NDK family. In terms of assembly, homotetramer. It depends on Mg(2+) as a cofactor.

The protein localises to the cytoplasm. It carries out the reaction a 2'-deoxyribonucleoside 5'-diphosphate + ATP = a 2'-deoxyribonucleoside 5'-triphosphate + ADP. The catalysed reaction is a ribonucleoside 5'-diphosphate + ATP = a ribonucleoside 5'-triphosphate + ADP. Its function is as follows. Major role in the synthesis of nucleoside triphosphates other than ATP. The ATP gamma phosphate is transferred to the NDP beta phosphate via a ping-pong mechanism, using a phosphorylated active-site intermediate. In Methylorubrum extorquens (strain CM4 / NCIMB 13688) (Methylobacterium extorquens), this protein is Nucleoside diphosphate kinase.